Here is a 334-residue protein sequence, read N- to C-terminus: Glycerol-3-phosphate dehydrogenase [NAD(P)+] (334 aa).

NADPH-binding residues include tryptophan 14, arginine 34, and lysine 107. Sn-glycerol 3-phosphate-binding residues include lysine 107 and glycine 135. Alanine 139 contributes to the NADPH binding site. Positions 190, 243, 253, 254, and 255 each coordinate sn-glycerol 3-phosphate. The active-site Proton acceptor is lysine 190. Arginine 254 provides a ligand contact to NADPH. NADPH contacts are provided by valine 272 and glutamate 273.

It belongs to the NAD-dependent glycerol-3-phosphate dehydrogenase family.

Its subcellular location is the cytoplasm. The catalysed reaction is sn-glycerol 3-phosphate + NAD(+) = dihydroxyacetone phosphate + NADH + H(+). It carries out the reaction sn-glycerol 3-phosphate + NADP(+) = dihydroxyacetone phosphate + NADPH + H(+). It functions in the pathway membrane lipid metabolism; glycerophospholipid metabolism. In terms of biological role, catalyzes the reduction of the glycolytic intermediate dihydroxyacetone phosphate (DHAP) to sn-glycerol 3-phosphate (G3P), the key precursor for phospholipid synthesis. This Neorickettsia sennetsu (strain ATCC VR-367 / Miyayama) (Ehrlichia sennetsu) protein is Glycerol-3-phosphate dehydrogenase [NAD(P)+].